Consider the following 93-residue polypeptide: Small ribosomal subunit protein uS19 (93 aa).

Belongs to the universal ribosomal protein uS19 family.

Functionally, protein S19 forms a complex with S13 that binds strongly to the 16S ribosomal RNA. This is Small ribosomal subunit protein uS19 from Wolinella succinogenes (strain ATCC 29543 / DSM 1740 / CCUG 13145 / JCM 31913 / LMG 7466 / NCTC 11488 / FDC 602W) (Vibrio succinogenes).